Reading from the N-terminus, the 601-residue chain is ATP-dependent lipid A-core flippase (601 aa).

6 helical membrane passes run 35 to 55 (FAVAMVCMLIAGALTSSLAFL), 77 to 97 (LAIILIYLVKGGCSYFQAILM), 150 to 170 (AVTSLMKDSFTLICLVFVIFY), 173 to 193 (WQLAIIAMIVFPLTIYPIAKF), 263 to 283 (MEFLGGIGIAAIIFYGGYQVI), and 286 to 306 (SSTPGTFFSFLTALIMLYEPV). Positions 36-318 (AVAMVCMLIA…LTNVNNTIQQ (283 aa)) constitute an ABC transmembrane type-1 domain. Positions 352–585 (IEIRNISFAY…RGEYYKLHQL (234 aa)) constitute an ABC transporter domain. Residue 384-391 (GMSGGGKT) participates in ATP binding.

It belongs to the ABC transporter superfamily. Lipid exporter (TC 3.A.1.106) family. In terms of assembly, homodimer.

The protein resides in the cell inner membrane. It carries out the reaction ATP + H2O + lipid A-core oligosaccharideSide 1 = ADP + phosphate + lipid A-core oligosaccharideSide 2.. In terms of biological role, involved in lipopolysaccharide (LPS) biosynthesis. Translocates lipid A-core from the inner to the outer leaflet of the inner membrane. Transmembrane domains (TMD) form a pore in the inner membrane and the ATP-binding domain (NBD) is responsible for energy generation. In Syntrophus aciditrophicus (strain SB), this protein is ATP-dependent lipid A-core flippase.